Here is a 248-residue protein sequence, read N- to C-terminus: ATP synthase subunit a (248 aa).

Helical transmembrane passes span 29–49, 85–105, 115–135, 143–163, 176–196, 201–221, and 227–247; these read AMLT…CLFS, VFPF…QGLV, LIQT…IVLA, LFLP…IEIV, LFAN…VAWA, GGLL…LFGL, and LIQA…AIVL.

The protein belongs to the ATPase A chain family. F-type ATPases have 2 components, CF(1) - the catalytic core - and CF(0) - the membrane proton channel. CF(1) has five subunits: alpha(3), beta(3), gamma(1), delta(1), epsilon(1). CF(0) has three main subunits: a, b and c.

Its subcellular location is the mitochondrion inner membrane. Mitochondrial membrane ATP synthase (F(1)F(0) ATP synthase or Complex V) produces ATP from ADP in the presence of a proton gradient across the membrane which is generated by electron transport complexes of the respiratory chain. F-type ATPases consist of two structural domains, F(1) - containing the extramembraneous catalytic core and F(0) - containing the membrane proton channel, linked together by a central stalk and a peripheral stalk. During catalysis, ATP synthesis in the catalytic domain of F(1) is coupled via a rotary mechanism of the central stalk subunits to proton translocation. Key component of the proton channel; it may play a direct role in the translocation of protons across the membrane. This chain is ATP synthase subunit a (ATP6), found in Pylaiella littoralis (Seaweed).